Here is a 574-residue protein sequence, read N- to C-terminus: PI-PLC X domain-containing protein DDB_G0269228 (574 aa).

The tract at residues methionine 1 to lysine 42 is disordered. Over residues threonine 21–serine 34 the composition is skewed to low complexity. Positions glycine 270 to glycine 449 constitute a PI-PLC X-box domain.

The protein is PI-PLC X domain-containing protein DDB_G0269228 of Dictyostelium discoideum (Social amoeba).